The chain runs to 387 residues: Patatin-02 (387 aa).

The signal sequence occupies residues 1–23 (MATTKSFLILIVMILATTSSTFA). One can recognise a PNPLA domain in the interval 32–230 (LSIDGGGIKG…TVADPALLSV (199 aa)). The GXGXXG motif lies at 36–41 (GGGIKG). The short motif at 75-79 (GTSTG) is the GXSXG element. Residue serine 77 is the Nucleophile of the active site. Asparagine 115 carries an N-linked (GlcNAc...) asparagine glycan. The active-site Proton acceptor is aspartate 216. Residues 216-218 (DGA) carry the DGA/G motif. The stretch at 361 to 385 (ETYEEALKRFAKLLSDRKKLRANKA) forms a coiled coil.

It belongs to the patatin family. As to expression, tuber and stolon.

Its subcellular location is the vacuole. Functionally, probable lipolytic acyl hydrolase (LAH), an activity which is thought to be involved in the response of tubers to pathogens. This Solanum tuberosum (Potato) protein is Patatin-02.